Consider the following 221-residue polypeptide: Glutathione S-transferase alpha-5 (221 aa).

The region spanning 3–83 is the GST N-terminal domain; it reads GKPVLHYFDG…YIATKYNLYG (81 aa). K4 is modified (N6-succinyllysine). Glutathione-binding positions include Y9, R45, 54–55, and 67–68; these read QV and QT. Positions 85 to 207 constitute a GST C-terminal domain; that stretch reads DMKERALIDM…LQPGSQRKPF (123 aa).

It belongs to the GST superfamily. Alpha family. In terms of assembly, heterodimer of YC1 and YC2. As to expression, liver, nasal mucosa and epididymis.

The protein resides in the cytoplasm. The enzyme catalyses RX + glutathione = an S-substituted glutathione + a halide anion + H(+). In terms of biological role, conjugation of reduced glutathione to a wide number of exogenous and endogenous hydrophobic electrophiles. Has substantial activity toward aflatoxin B1-8,9-epoxide. This chain is Glutathione S-transferase alpha-5 (Gsta5), found in Rattus norvegicus (Rat).